The primary structure comprises 208 residues: MLSRAMKNLLTQLRQQGIEDERLLAAISAVPRERFVDEALAHKAYENTALPIGYGQTISQPYIVARMTELLQLTPDAKILEIGTGSGYQTAILAHLVKHVFSVERIKGLQWQAKRRLKQLDLHNVSTRHGDGWQGWPSRGLFDAIIVTAAPPYIPQELMLQLTDGGVMVLPVGEHTQILKSVKRHGNGFHSEVIEAVRFVPLVQGELA.

Residue S59 is part of the active site.

It belongs to the methyltransferase superfamily. L-isoaspartyl/D-aspartyl protein methyltransferase family.

Its subcellular location is the cytoplasm. The enzyme catalyses [protein]-L-isoaspartate + S-adenosyl-L-methionine = [protein]-L-isoaspartate alpha-methyl ester + S-adenosyl-L-homocysteine. Functionally, catalyzes the methyl esterification of L-isoaspartyl residues in peptides and proteins that result from spontaneous decomposition of normal L-aspartyl and L-asparaginyl residues. It plays a role in the repair and/or degradation of damaged proteins. This Photorhabdus laumondii subsp. laumondii (strain DSM 15139 / CIP 105565 / TT01) (Photorhabdus luminescens subsp. laumondii) protein is Protein-L-isoaspartate O-methyltransferase.